A 428-amino-acid chain; its full sequence is Serine--tRNA ligase (428 aa).

234 to 236 (TAE) contacts L-serine. 265-267 (RRE) provides a ligand contact to ATP. Glutamate 288 provides a ligand contact to L-serine. 352–355 (EISS) contributes to the ATP binding site. Serine 388 contributes to the L-serine binding site.

Belongs to the class-II aminoacyl-tRNA synthetase family. Type-1 seryl-tRNA synthetase subfamily. In terms of assembly, homodimer. The tRNA molecule binds across the dimer.

The protein resides in the cytoplasm. It catalyses the reaction tRNA(Ser) + L-serine + ATP = L-seryl-tRNA(Ser) + AMP + diphosphate + H(+). It carries out the reaction tRNA(Sec) + L-serine + ATP = L-seryl-tRNA(Sec) + AMP + diphosphate + H(+). The protein operates within aminoacyl-tRNA biosynthesis; selenocysteinyl-tRNA(Sec) biosynthesis; L-seryl-tRNA(Sec) from L-serine and tRNA(Sec): step 1/1. Its function is as follows. Catalyzes the attachment of serine to tRNA(Ser). Is also able to aminoacylate tRNA(Sec) with serine, to form the misacylated tRNA L-seryl-tRNA(Sec), which will be further converted into selenocysteinyl-tRNA(Sec). The sequence is that of Serine--tRNA ligase from Synechococcus elongatus (strain ATCC 33912 / PCC 7942 / FACHB-805) (Anacystis nidulans R2).